Here is a 236-residue protein sequence, read N- to C-terminus: Probable calcium-binding protein CML30 (236 aa).

The tract at residues 43–64 is disordered; the sequence is VVVVAKKRPEEEPRRPDPDADL. The segment covering 49-60 has biased composition (basic and acidic residues); sequence KRPEEEPRRPDP. 2 consecutive EF-hand domains span residues 59 to 94 and 96 to 131; these read DPDA…LGIA and SSAA…IPKR. 8 residues coordinate Ca(2+): Asp-72, Asp-74, Asp-76, Glu-83, Asp-109, Asn-111, Asp-113, and Glu-120. The interval 130–158 is disordered; that stretch reads KRRKSHQQHPLPSTAAADEEAAAADEEYE. Positions 146–158 are enriched in acidic residues; it reads ADEEAAAADEEYE. EF-hand domains lie at 161–196 and 202–236; these read EEER…LGLR and PAVA…VVKA. The Ca(2+) site is built by Asp-174, Asn-176, Asp-178, Glu-185, Asp-215, Asp-217, Asp-219, Met-221, and Glu-226.

In terms of biological role, potential calcium sensor. The protein is Probable calcium-binding protein CML30 (CML30) of Oryza sativa subsp. japonica (Rice).